A 698-amino-acid chain; its full sequence is Methionine--tRNA ligase (698 aa).

Positions 21-31 (PYANGPLHFGH) match the 'HIGH' region motif. Positions 153, 156, 166, and 169 each coordinate Zn(2+). Residues 341-345 (QFSKS) carry the 'KMSKS' region motif. Residue Lys-344 participates in ATP binding. The region spanning 599–698 (DFRKLDLRVG…EDVAPGSLVS (100 aa)) is the tRNA-binding domain.

The protein belongs to the class-I aminoacyl-tRNA synthetase family. MetG type 1 subfamily. In terms of assembly, homodimer. The cofactor is Zn(2+).

It is found in the cytoplasm. The enzyme catalyses tRNA(Met) + L-methionine + ATP = L-methionyl-tRNA(Met) + AMP + diphosphate. Its function is as follows. Is required not only for elongation of protein synthesis but also for the initiation of all mRNA translation through initiator tRNA(fMet) aminoacylation. The protein is Methionine--tRNA ligase of Protochlamydia amoebophila (strain UWE25).